A 487-amino-acid chain; its full sequence is 2-aminomuconic semialdehyde dehydrogenase (487 aa).

Gly-231–Ala-236 is a binding site for NAD(+). Glu-253 serves as the catalytic Proton acceptor. Cys-287 serves as the catalytic Nucleophile.

It belongs to the aldehyde dehydrogenase family.

It is found in the cytoplasm. It carries out the reaction 2-aminomuconate 6-semialdehyde + NAD(+) + H2O = (2Z,4E)-2-aminomuconate + NADH + 2 H(+). Its pathway is amino-acid degradation; L-kynurenine degradation. Functionally, catalyzes the NAD-dependent oxidation of 2-aminomuconic semialdehyde of the kynurenine metabolic pathway in L-tryptophan degradation. The sequence is that of 2-aminomuconic semialdehyde dehydrogenase (aldh8a1) from Danio rerio (Zebrafish).